The primary structure comprises 273 residues: Ribosomal RNA small subunit methyltransferase A (273 aa).

N18, L20, G45, E66, D91, and N113 together coordinate S-adenosyl-L-methionine.

Belongs to the class I-like SAM-binding methyltransferase superfamily. rRNA adenine N(6)-methyltransferase family. RsmA subfamily.

The protein localises to the cytoplasm. It carries out the reaction adenosine(1518)/adenosine(1519) in 16S rRNA + 4 S-adenosyl-L-methionine = N(6)-dimethyladenosine(1518)/N(6)-dimethyladenosine(1519) in 16S rRNA + 4 S-adenosyl-L-homocysteine + 4 H(+). Its function is as follows. Specifically dimethylates two adjacent adenosines (A1518 and A1519) in the loop of a conserved hairpin near the 3'-end of 16S rRNA in the 30S particle. May play a critical role in biogenesis of 30S subunits. The protein is Ribosomal RNA small subunit methyltransferase A of Shigella boydii serotype 4 (strain Sb227).